A 167-amino-acid polypeptide reads, in one-letter code: MASGVTVNDEVIKVFNEMKVRKSSTPEEIKKRKKAVLFCLSPDKKEIIVEETKQILVGDIGEAVPDPYRTFVNLLPLDDCRYGLYDATYETKESKKEDLVFIFWAPDNAPLKSKMIYASSKDAIKKKFTGIKHEWQVNGLDDIKDRCTLADKLGGNVVVSLEGVPLK.

An ADF-H domain is found at 4–153; it reads GVTVNDEVIK…KDRCTLADKL (150 aa). Residues 30-34 carry the Nuclear localization signal motif; sequence KKRKK.

It belongs to the actin-binding proteins ADF family.

The protein localises to the nucleus matrix. Its subcellular location is the cytoplasm. It is found in the cytoskeleton. In terms of biological role, controls reversibly actin polymerization and depolymerization in a pH-sensitive manner. It has the ability to bind G- and F-actin in a 1:1 ratio of cofilin to actin. It is the major component of intranuclear and cytoplasmic actin rods. In Xenopus tropicalis (Western clawed frog), this protein is Cofilin-2 (cfl2).